The following is a 637-amino-acid chain: Threonine--tRNA ligase (637 aa).

A TGS domain is found at 1–61; the sequence is MITITLPDSS…ATDAAVRLIT (61 aa). Residues 238–528 are catalytic; that stretch reads DHRKLGAELD…LIEHFAGKFP (291 aa). Zn(2+)-binding residues include C329, H380, and H505.

Belongs to the class-II aminoacyl-tRNA synthetase family. As to quaternary structure, homodimer. It depends on Zn(2+) as a cofactor.

Its subcellular location is the cytoplasm. The enzyme catalyses tRNA(Thr) + L-threonine + ATP = L-threonyl-tRNA(Thr) + AMP + diphosphate + H(+). In terms of biological role, catalyzes the attachment of threonine to tRNA(Thr) in a two-step reaction: L-threonine is first activated by ATP to form Thr-AMP and then transferred to the acceptor end of tRNA(Thr). Also edits incorrectly charged L-seryl-tRNA(Thr). In Desulfosudis oleivorans (strain DSM 6200 / JCM 39069 / Hxd3) (Desulfococcus oleovorans), this protein is Threonine--tRNA ligase.